Consider the following 136-residue polypeptide: Holo-[acyl-carrier-protein] synthase (136 aa).

The Mg(2+) site is built by D8 and E57.

Belongs to the P-Pant transferase superfamily. AcpS family. Requires Mg(2+) as cofactor.

Its subcellular location is the cytoplasm. The enzyme catalyses apo-[ACP] + CoA = holo-[ACP] + adenosine 3',5'-bisphosphate + H(+). Functionally, transfers the 4'-phosphopantetheine moiety from coenzyme A to a Ser of acyl-carrier-protein. In Methylorubrum extorquens (strain CM4 / NCIMB 13688) (Methylobacterium extorquens), this protein is Holo-[acyl-carrier-protein] synthase.